A 547-amino-acid polypeptide reads, in one-letter code: Probable pectinesterase/pectinesterase inhibitor 12 (547 aa).

The first 23 residues, methionine 1–serine 23, serve as a signal peptide directing secretion. Residues asparagine 31–alanine 185 form a pectinesterase inhibitor 12 region. N-linked (GlcNAc...) asparagine glycosylation is found at asparagine 131, asparagine 247, asparagine 260, and asparagine 303. The segment at serine 237–aspartate 533 is pectinesterase 12. Substrate contacts are provided by threonine 312 and glutamine 342. The Proton donor; for pectinesterase activity role is filled by aspartate 365. Cysteines 379 and 399 form a disulfide. The active-site Nucleophile; for pectinesterase activity is aspartate 386. Residues asparagine 432 and asparagine 443 are each glycosylated (N-linked (GlcNAc...) asparagine). Substrate-binding residues include arginine 454 and tryptophan 456. An N-linked (GlcNAc...) asparagine glycan is attached at asparagine 523.

In the N-terminal section; belongs to the PMEI family. This sequence in the C-terminal section; belongs to the pectinesterase family. As to expression, expressed in siliques.

The protein resides in the secreted. Its subcellular location is the cell wall. It carries out the reaction [(1-&gt;4)-alpha-D-galacturonosyl methyl ester](n) + n H2O = [(1-&gt;4)-alpha-D-galacturonosyl](n) + n methanol + n H(+). It functions in the pathway glycan metabolism; pectin degradation; 2-dehydro-3-deoxy-D-gluconate from pectin: step 1/5. Its function is as follows. Acts in the modification of cell walls via demethylesterification of cell wall pectin. The chain is Probable pectinesterase/pectinesterase inhibitor 12 (PME12) from Arabidopsis thaliana (Mouse-ear cress).